Reading from the N-terminus, the 72-residue chain is uncharacterized protein (72 aa).

The protein localises to the cytoplasm. The protein resides in the nucleus. This is an uncharacterized protein from Saccharomyces cerevisiae (strain ATCC 204508 / S288c) (Baker's yeast).